Here is a 362-residue protein sequence, read N- to C-terminus: Heat-inducible transcription repressor HrcA (362 aa).

This sequence belongs to the HrcA family.

Negative regulator of class I heat shock genes (grpE-dnaK-dnaJ and groELS operons). Prevents heat-shock induction of these operons. This Rhodopseudomonas palustris (strain BisB18) protein is Heat-inducible transcription repressor HrcA.